The following is a 372-amino-acid chain: Flagellar P-ring protein (372 aa).

The N-terminal stretch at 1 to 26 (MNLSSLPFRLLAAAVALCAIAAPASA) is a signal peptide.

It belongs to the FlgI family. The basal body constitutes a major portion of the flagellar organelle and consists of four rings (L,P,S, and M) mounted on a central rod.

It is found in the periplasm. Its subcellular location is the bacterial flagellum basal body. Functionally, assembles around the rod to form the L-ring and probably protects the motor/basal body from shearing forces during rotation. The protein is Flagellar P-ring protein of Xanthomonas axonopodis pv. citri (strain 306).